Here is a 347-residue protein sequence, read N- to C-terminus: Adenine deaminase (347 aa).

Residues His16, His18, and His204 each coordinate Zn(2+). The Proton donor role is filled by Glu207. Asp285 is a Zn(2+) binding site. Asp286 contacts substrate.

The protein belongs to the metallo-dependent hydrolases superfamily. Adenosine and AMP deaminases family. Adenine deaminase type 2 subfamily. Zn(2+) serves as cofactor.

Its subcellular location is the cytoplasm. It is found in the nucleus. It catalyses the reaction adenine + H2O + H(+) = hypoxanthine + NH4(+). Its function is as follows. Catalyzes the hydrolytic deamination of adenine to hypoxanthine. Plays an important role in the purine salvage pathway and in nitrogen catabolism. This chain is Adenine deaminase, found in Candida glabrata (strain ATCC 2001 / BCRC 20586 / JCM 3761 / NBRC 0622 / NRRL Y-65 / CBS 138) (Yeast).